We begin with the raw amino-acid sequence, 283 residues long: Serine/threonine-protein phosphatase Pgam5, mitochondrial (283 aa).

The helical transmembrane segment at 7–23 (MYGLPSAAVAVGTALLN) threads the bilayer.

This sequence belongs to the phosphoglycerate mutase family. BPG-dependent PGAM subfamily. Interacts with skn-1.

It localises to the mitochondrion outer membrane. The catalysed reaction is O-phospho-L-seryl-[protein] + H2O = L-seryl-[protein] + phosphate. It catalyses the reaction O-phospho-L-threonyl-[protein] + H2O = L-threonyl-[protein] + phosphate. Displays phosphatase activity for serine/threonine residues. Has apparently no phosphoglycerate mutase activity. This is Serine/threonine-protein phosphatase Pgam5, mitochondrial (pgam-5) from Caenorhabditis briggsae.